Reading from the N-terminus, the 302-residue chain is Sulfate adenylyltransferase subunit 2 (302 aa).

Belongs to the PAPS reductase family. CysD subfamily. In terms of assembly, heterodimer composed of CysD, the smaller subunit, and CysN.

It catalyses the reaction sulfate + ATP + H(+) = adenosine 5'-phosphosulfate + diphosphate. It participates in sulfur metabolism; hydrogen sulfide biosynthesis; sulfite from sulfate: step 1/3. In terms of biological role, with CysN forms the ATP sulfurylase (ATPS) that catalyzes the adenylation of sulfate producing adenosine 5'-phosphosulfate (APS) and diphosphate, the first enzymatic step in sulfur assimilation pathway. APS synthesis involves the formation of a high-energy phosphoric-sulfuric acid anhydride bond driven by GTP hydrolysis by CysN coupled to ATP hydrolysis by CysD. This chain is Sulfate adenylyltransferase subunit 2, found in Photorhabdus laumondii subsp. laumondii (strain DSM 15139 / CIP 105565 / TT01) (Photorhabdus luminescens subsp. laumondii).